The following is a 20-amino-acid chain: Hemoglobinase-like protein 1 (20 aa).

It belongs to the peptidase C13 family.

It catalyses the reaction Hydrolysis of proteins and small molecule substrates at -Asn-|-Xaa- bonds.. The polypeptide is Hemoglobinase-like protein 1 (Fasciola hepatica (Liver fluke)).